Reading from the N-terminus, the 36-residue chain is Photosystem II reaction center protein Y (36 aa).

Over 1–4 the chain is Lumenal; the sequence is MDTR. Residues 5–23 traverse the membrane as a helical segment; sequence LLVIAAPVLVAASWALFNI. Residues 24–36 are Stromal-facing; sequence GRLAIQQIQRLSR.

It belongs to the PsbY family. PSII is composed of 1 copy each of membrane proteins PsbA, PsbB, PsbC, PsbD, PsbE, PsbF, PsbH, PsbI, PsbJ, PsbK, PsbL, PsbM, PsbT, PsbX, PsbY, PsbZ, Psb30/Ycf12, at least 3 peripheral proteins of the oxygen-evolving complex and a large number of cofactors. It forms dimeric complexes.

Its subcellular location is the plastid. It is found in the chloroplast thylakoid membrane. In terms of biological role, loosely associated component of the core of photosystem II (PSII), it is not always seen in crystals. PSII is a light-driven water plastoquinone oxidoreductase, using light energy to abstract electrons from H(2)O, generating a proton gradient subsequently used for ATP formation. In Thalassiosira pseudonana (Marine diatom), this protein is Photosystem II reaction center protein Y.